A 395-amino-acid polypeptide reads, in one-letter code: 8-amino-7-oxononanoate synthase/2-amino-3-ketobutyrate coenzyme A ligase (395 aa).

Residue 110–111 (GF) participates in pyridoxal 5'-phosphate binding. Substrate is bound at residue H135. Residues S182, 207-210 (DDAH), and 239-242 (TLSK) each bind pyridoxal 5'-phosphate. K242 carries the N6-(pyridoxal phosphate)lysine modification. Residue T356 coordinates substrate.

The protein belongs to the class-II pyridoxal-phosphate-dependent aminotransferase family. Homodimer. Pyridoxal 5'-phosphate serves as cofactor.

It catalyses the reaction 6-carboxyhexanoyl-[ACP] + L-alanine + H(+) = (8S)-8-amino-7-oxononanoate + holo-[ACP] + CO2. The enzyme catalyses glycine + acetyl-CoA = (2S)-2-amino-3-oxobutanoate + CoA. The protein operates within cofactor biosynthesis; biotin biosynthesis. In terms of biological role, catalyzes the decarboxylative condensation of pimeloyl-[acyl-carrier protein] and L-alanine to produce 8-amino-7-oxononanoate (AON), [acyl-carrier protein], and carbon dioxide. Can also use pimeloyl-CoA instead of pimeloyl-ACP as substrate. It also converts 2-amino-3-ketobutyrate and CoA to glycine and acetyl-CoA. Activity is also observed with the following combinations of substrates: acetyl-CoA and either L-alanine or L-serine, pimeloyl-CoA and either glycine or L-serine, and palmitoyl-CoA with L-alanine. This chain is 8-amino-7-oxononanoate synthase/2-amino-3-ketobutyrate coenzyme A ligase, found in Thermus thermophilus (strain ATCC 27634 / DSM 579 / HB8).